Reading from the N-terminus, the 560-residue chain is Chaperonin GroEL 2 (560 aa).

ATP is bound by residues Thr-29–Pro-32, Asp-86–Thr-90, Gly-413, and Asp-492. The interval Asp-520–Met-542 is disordered. Gly residues predominate over residues Ala-530–Met-542.

It belongs to the chaperonin (HSP60) family. Forms a cylinder of 14 subunits composed of two heptameric rings stacked back-to-back. Interacts with the co-chaperonin GroES.

Its subcellular location is the cytoplasm. It catalyses the reaction ATP + H2O + a folded polypeptide = ADP + phosphate + an unfolded polypeptide.. Together with its co-chaperonin GroES, plays an essential role in assisting protein folding. The GroEL-GroES system forms a nano-cage that allows encapsulation of the non-native substrate proteins and provides a physical environment optimized to promote and accelerate protein folding. The polypeptide is Chaperonin GroEL 2 (Prochlorococcus marinus (strain NATL2A)).